Consider the following 74-residue polypeptide: MKTDFNQKIEQLKEFIEECRRVWLVLKKPTKDEYLAVAKVTALGISLLGIIGYIIHVPATYIKGILKPPTTPRV.

At 1 to 36 the chain is on the cytoplasmic side; it reads MKTDFNQKIEQLKEFIEECRRVWLVLKKPTKDEYLA. A helical membrane pass occupies residues 37-62; the sequence is VAKVTALGISLLGIIGYIIHVPATYI. At 63 to 74 the chain is on the extracellular side; it reads KGILKPPTTPRV.

The protein belongs to the SecE/SEC61-gamma family. In terms of assembly, component of the Sec protein translocase complex. Heterotrimer consisting of alpha (SecY), beta (SecG) and gamma (SecE) subunits. The heterotrimers can form oligomers, although 1 heterotrimer is thought to be able to translocate proteins. Interacts with the ribosome. May interact with SecDF, and other proteins may be involved.

The protein resides in the cell membrane. Functionally, essential subunit of the protein translocation channel SecYEG. Clamps together the 2 halves of SecY. May contact the channel plug during translocation. This is Protein translocase subunit SecE from Methanocaldococcus jannaschii (strain ATCC 43067 / DSM 2661 / JAL-1 / JCM 10045 / NBRC 100440) (Methanococcus jannaschii).